The primary structure comprises 728 residues: Polyribonucleotide nucleotidyltransferase (728 aa).

Mg(2+) contacts are provided by D488 and D494. A KH domain is found at 555 to 614 (PRMITMKIHPDKIREVIGKGGSTIQALTKETGTTIDIQEDGTITIASTSTDGMAEAKRRI). The S1 motif domain maps to 624–692 (GKIYNGTVLK…EKGRLRLSLK (69 aa)). The tract at residues 702–728 (ISPVNAGEAAPAPAPAAAPATPSDQQQ) is disordered. Residues 710–721 (AAPAPAPAAAPA) show a composition bias toward low complexity.

It belongs to the polyribonucleotide nucleotidyltransferase family. The cofactor is Mg(2+).

Its subcellular location is the cytoplasm. The enzyme catalyses RNA(n+1) + phosphate = RNA(n) + a ribonucleoside 5'-diphosphate. Functionally, involved in mRNA degradation. Catalyzes the phosphorolysis of single-stranded polyribonucleotides processively in the 3'- to 5'-direction. The sequence is that of Polyribonucleotide nucleotidyltransferase from Cupriavidus pinatubonensis (strain JMP 134 / LMG 1197) (Cupriavidus necator (strain JMP 134)).